We begin with the raw amino-acid sequence, 489 residues long: COX3 mRNA-specific translational activator PET494 (489 aa).

It localises to the mitochondrion inner membrane. In terms of biological role, required for the expression of the mitochondrial gene for cytochrome c oxidase subunit III (COX3). The sequence is that of COX3 mRNA-specific translational activator PET494 (PET494) from Saccharomyces bayanus (Yeast).